Reading from the N-terminus, the 127-residue chain is Aspartate 1-decarboxylase (127 aa).

S25 serves as the catalytic Schiff-base intermediate with substrate; via pyruvic acid. S25 carries the post-translational modification Pyruvic acid (Ser). Substrate is bound at residue T57. Y58 serves as the catalytic Proton donor. Residue 73–75 participates in substrate binding; that stretch reads GAA.

Belongs to the PanD family. As to quaternary structure, heterooctamer of four alpha and four beta subunits. Pyruvate is required as a cofactor. Post-translationally, is synthesized initially as an inactive proenzyme, which is activated by self-cleavage at a specific serine bond to produce a beta-subunit with a hydroxyl group at its C-terminus and an alpha-subunit with a pyruvoyl group at its N-terminus.

It is found in the cytoplasm. It catalyses the reaction L-aspartate + H(+) = beta-alanine + CO2. It participates in cofactor biosynthesis; (R)-pantothenate biosynthesis; beta-alanine from L-aspartate: step 1/1. Functionally, catalyzes the pyruvoyl-dependent decarboxylation of aspartate to produce beta-alanine. The protein is Aspartate 1-decarboxylase of Listeria innocua serovar 6a (strain ATCC BAA-680 / CLIP 11262).